Reading from the N-terminus, the 160-residue chain is Putative antiporter subunit mnhE2 (160 aa).

Helical transmembrane passes span 22–42, 61–81, and 102–122; these read SFQFSTFVSGFIIGLIVIYIL, FLGVYLYQLITSSISIINYIL, and WAITFLTILIIITPGSTVIRI.

The protein belongs to the CPA3 antiporters (TC 2.A.63) subunit E family. In terms of assembly, may form a heterooligomeric complex that consists of seven subunits: mnhA2, mnhB2, mnhC2, mnhD2, mnhE2, mnhF2 and mnhG2.

It localises to the cell membrane. The chain is Putative antiporter subunit mnhE2 (mnhE2) from Staphylococcus haemolyticus (strain JCSC1435).